A 188-amino-acid polypeptide reads, in one-letter code: GTP cyclohydrolase 1 (188 aa).

Cys76, His79, and Cys148 together coordinate Zn(2+).

This sequence belongs to the GTP cyclohydrolase I family. Homomer.

It carries out the reaction GTP + H2O = 7,8-dihydroneopterin 3'-triphosphate + formate + H(+). It functions in the pathway cofactor biosynthesis; 7,8-dihydroneopterin triphosphate biosynthesis; 7,8-dihydroneopterin triphosphate from GTP: step 1/1. In Thermoanaerobacter pseudethanolicus (strain ATCC 33223 / 39E) (Clostridium thermohydrosulfuricum), this protein is GTP cyclohydrolase 1.